A 227-amino-acid chain; its full sequence is MSAVPLRILCIHGYRQNGNSFREKTGALRKLLKKQVELVFISAPHQVPAIQEENCGTNQQSQTVSVGDEDQRGWWFSDVQARSFNAKQDCESSLGLEESIEAVKAALKDLGPFSGILGFSQGAALVAMLCALQEQKLEPDFNFRFAILVAGFRSACLEHQRFYEGPVITIPSLHVFGQDDRVIPEEMSRDLLPAFDGAQVLLHPGGHFVPAASSHRQTYQDFLKRFQ.

Residues Ser-120, Asp-180, and His-207 each act as charge relay system in the active site.

It belongs to the LovG family.

The catalysed reaction is a carboxylic ester + H2O = an alcohol + a carboxylate + H(+). Its function is as follows. Exhibits ester hydrolase activity with a strong preference for long-chain alkyl ester substrates and high selectivity against a variety of short, branched, and substituted esters. Is able to hydrolyze ester bonds within a wide range of p-nitrophenyl derivatives (C2-C14) in vitro, with a strong preference toward substrates of &gt;8 carbons. The protein is Esterase OVCA2 (ovca2) of Danio rerio (Zebrafish).